Reading from the N-terminus, the 307-residue chain is Voltage-dependent anion channel-forming protein alr2987 (307 aa).

A run of 4 helical transmembrane segments spans residues 19–39, 47–67, 209–229, and 238–258; these read VIGA…LVTL, VSQP…LLVF, PLAY…LLPF, and WTGL…AIGL.

It belongs to the anion channel-forming bestrophin (TC 1.A.46) family.

The protein resides in the cell membrane. The protein is Voltage-dependent anion channel-forming protein alr2987 of Nostoc sp. (strain PCC 7120 / SAG 25.82 / UTEX 2576).